The sequence spans 364 residues: 3-dehydroquinate synthase (364 aa).

Residues 71–76, 105–109, 129–130, K142, K151, and 169–172 each bind NAD(+); these read DGEQYK, GVIGD, TT, and CLKT. E184, H247, and H264 together coordinate Zn(2+).

This sequence belongs to the sugar phosphate cyclases superfamily. Dehydroquinate synthase family. The cofactor is Co(2+). It depends on Zn(2+) as a cofactor. Requires NAD(+) as cofactor.

It localises to the cytoplasm. It carries out the reaction 7-phospho-2-dehydro-3-deoxy-D-arabino-heptonate = 3-dehydroquinate + phosphate. It functions in the pathway metabolic intermediate biosynthesis; chorismate biosynthesis; chorismate from D-erythrose 4-phosphate and phosphoenolpyruvate: step 2/7. Functionally, catalyzes the conversion of 3-deoxy-D-arabino-heptulosonate 7-phosphate (DAHP) to dehydroquinate (DHQ). The polypeptide is 3-dehydroquinate synthase (Klebsiella pneumoniae (strain 342)).